Consider the following 118-residue polypeptide: V-type proton ATPase subunit G 1 (118 aa).

A2 bears the N-acetylalanine mark.

This sequence belongs to the V-ATPase G subunit family. As to quaternary structure, V-ATPase is a heteromultimeric enzyme made up of two complexes: the ATP-hydrolytic V1 complex and the proton translocation V0 complex. The V1 complex consists of three catalytic AB heterodimers that form a heterohexamer, three peripheral stalks each consisting of EG heterodimers, one central rotor including subunits D and F, and the regulatory subunits C and H. The proton translocation complex V0 consists of the proton transport subunit a, a ring of proteolipid subunits c9c'', rotary subunit d, subunits e and f, and the accessory subunits ATP6AP1/Ac45 and ATP6AP2/PRR. Kidney; localizes to early distal nephron, encompassing thick ascending limbs and distal convoluted tubules (at protein level). Ubiquitous.

The protein resides in the apical cell membrane. Its function is as follows. Subunit of the V1 complex of vacuolar(H+)-ATPase (V-ATPase), a multisubunit enzyme composed of a peripheral complex (V1) that hydrolyzes ATP and a membrane integral complex (V0) that translocates protons. V-ATPase is responsible for acidifying and maintaining the pH of intracellular compartments and in some cell types, is targeted to the plasma membrane, where it is responsible for acidifying the extracellular environment. In aerobic conditions, involved in intracellular iron homeostasis, thus triggering the activity of Fe(2+) prolyl hydroxylase (PHD) enzymes, and leading to HIF1A hydroxylation and subsequent proteasomal degradation. The sequence is that of V-type proton ATPase subunit G 1 (ATP6V1G1) from Homo sapiens (Human).